The sequence spans 373 residues: UDP-N-acetylglucosamine--N-acetylmuramyl-(pentapeptide) pyrophosphoryl-undecaprenol N-acetylglucosamine transferase (373 aa).

Residues 16-18 (TGG), asparagine 128, arginine 164, serine 192, isoleucine 250, and glutamine 295 contribute to the UDP-N-acetyl-alpha-D-glucosamine site.

This sequence belongs to the glycosyltransferase 28 family. MurG subfamily.

It localises to the cell inner membrane. The enzyme catalyses di-trans,octa-cis-undecaprenyl diphospho-N-acetyl-alpha-D-muramoyl-L-alanyl-D-glutamyl-meso-2,6-diaminopimeloyl-D-alanyl-D-alanine + UDP-N-acetyl-alpha-D-glucosamine = di-trans,octa-cis-undecaprenyl diphospho-[N-acetyl-alpha-D-glucosaminyl-(1-&gt;4)]-N-acetyl-alpha-D-muramoyl-L-alanyl-D-glutamyl-meso-2,6-diaminopimeloyl-D-alanyl-D-alanine + UDP + H(+). It functions in the pathway cell wall biogenesis; peptidoglycan biosynthesis. In terms of biological role, cell wall formation. Catalyzes the transfer of a GlcNAc subunit on undecaprenyl-pyrophosphoryl-MurNAc-pentapeptide (lipid intermediate I) to form undecaprenyl-pyrophosphoryl-MurNAc-(pentapeptide)GlcNAc (lipid intermediate II). This chain is UDP-N-acetylglucosamine--N-acetylmuramyl-(pentapeptide) pyrophosphoryl-undecaprenol N-acetylglucosamine transferase, found in Paraburkholderia phymatum (strain DSM 17167 / CIP 108236 / LMG 21445 / STM815) (Burkholderia phymatum).